We begin with the raw amino-acid sequence, 256 residues long: Bialaphos biosynthetic pathway regulatory protein (256 aa).

The HTH luxR-type domain occupies 184-249; sequence ETADAIDVSD…QLGARAAECR (66 aa). Positions 208 to 227 form a DNA-binding region, H-T-H motif; the sequence is DVAMARSLGISTRTLRRVIT.

Involved in the regulation of the biosynthesis of phosphinothricin tripeptide (PTT), also known as bialaphos (BA), a natural-product antibiotic and potent herbicide. The chain is Bialaphos biosynthetic pathway regulatory protein (brpA) from Streptomyces hygroscopicus.